A 210-amino-acid polypeptide reads, in one-letter code: Ribosomal RNA large subunit methyltransferase E (210 aa).

Residues Gly61, Trp63, Asp81, Asp97, and Asp122 each coordinate S-adenosyl-L-methionine. Residue Lys162 is the Proton acceptor of the active site. The segment covering 187–196 (KPEASRKRSP) has biased composition (basic and acidic residues). Residues 187–210 (KPEASRKRSPEVYALGQGKRAHMK) are disordered.

The protein belongs to the class I-like SAM-binding methyltransferase superfamily. RNA methyltransferase RlmE family.

The protein resides in the cytoplasm. The catalysed reaction is uridine(2552) in 23S rRNA + S-adenosyl-L-methionine = 2'-O-methyluridine(2552) in 23S rRNA + S-adenosyl-L-homocysteine + H(+). In terms of biological role, specifically methylates the uridine in position 2552 of 23S rRNA at the 2'-O position of the ribose in the fully assembled 50S ribosomal subunit. This is Ribosomal RNA large subunit methyltransferase E from Stenotrophomonas maltophilia (strain K279a).